The primary structure comprises 312 residues: MKTFAETAKAYLALTKPRVIELLLVATIPAMLQAARGEVNFGLILLTLIGGWMGAGAANTFNNVVDHDIDQLMRRTRRRPTARQTVSVGEARVFAWVLLIASVLWLGFLCHSWLAAGFIVLTNWFYVFVYTKWLKRRTWQNVIWGGAAGCMPVIVGWAVITDNNGGAFHAGWSSWLQAIILFMIIFFWTPPHTWALGMRYREDYEAAGVPMMPVVKPPLQVTRQILAYTWAAVITSLLLVPAASWIYLAAALISGGWFIIKAHMLHQGVKNGTPVKPMQLFFLSNNYLSILFVALSVDAVLGWQTLAHAVLG.

A run of 8 helical transmembrane segments spans residues 12 to 32 (LALTKPRVIELLLVATIPAML), 41 to 61 (FGLILLTLIGGWMGAGAANTF), 93 to 113 (VFAWVLLIASVLWLGFLCHSW), 114 to 134 (LAAGFIVLTNWFYVFVYTKWL), 141 to 161 (NVIWGGAAGCMPVIVGWAVIT), 168 to 188 (FHAGWSSWLQAIILFMIIFFW), 240 to 260 (VPAASWIYLAAALISGGWFII), and 290 to 310 (ILFVALSVDAVLGWQTLAHAV).

It belongs to the UbiA prenyltransferase family. Protoheme IX farnesyltransferase subfamily.

The protein resides in the cell membrane. It catalyses the reaction heme b + (2E,6E)-farnesyl diphosphate + H2O = Fe(II)-heme o + diphosphate. It functions in the pathway porphyrin-containing compound metabolism; heme O biosynthesis; heme O from protoheme: step 1/1. Converts heme B (protoheme IX) to heme O by substitution of the vinyl group on carbon 2 of heme B porphyrin ring with a hydroxyethyl farnesyl side group. The polypeptide is Protoheme IX farnesyltransferase (Corynebacterium jeikeium (strain K411)).